The sequence spans 346 residues: Histidinol-phosphate aminotransferase (346 aa).

N6-(pyridoxal phosphate)lysine is present on Lys-209.

Belongs to the class-II pyridoxal-phosphate-dependent aminotransferase family. Histidinol-phosphate aminotransferase subfamily. As to quaternary structure, homodimer. Pyridoxal 5'-phosphate serves as cofactor.

It catalyses the reaction L-histidinol phosphate + 2-oxoglutarate = 3-(imidazol-4-yl)-2-oxopropyl phosphate + L-glutamate. It functions in the pathway amino-acid biosynthesis; L-histidine biosynthesis; L-histidine from 5-phospho-alpha-D-ribose 1-diphosphate: step 7/9. This chain is Histidinol-phosphate aminotransferase, found in Vibrio parahaemolyticus serotype O3:K6 (strain RIMD 2210633).